Consider the following 333-residue polypeptide: Replication factor C subunit 2 (333 aa).

Residue alanine 2 is modified to N-acetylalanine. 55 to 62 (GPPGTGKT) contacts ATP.

It belongs to the activator 1 small subunits family. As to quaternary structure, heterotetramer of subunits RFC2, RFC3, RFC4 and RFC5 that can form a complex with RFC1.

The protein resides in the nucleus. May be involved in DNA replication and thus regulate cell proliferation. The polypeptide is Replication factor C subunit 2 (RFC2) (Arabidopsis thaliana (Mouse-ear cress)).